Consider the following 622-residue polypeptide: Procollagen galactosyltransferase 1 (622 aa).

The N-terminal stretch at Met-1–Gly-29 is a signal peptide. Residues Asn-96, Asn-184, and Asn-381 are each glycosylated (N-linked (GlcNAc...) asparagine). Residues Arg-588–Asn-606 show a composition bias toward basic and acidic residues. Positions Arg-588–Leu-622 are disordered. The short motif at Arg-619–Leu-622 is the Endoplasmic reticulum retention motif element.

The protein belongs to the glycosyltransferase 25 family. In terms of processing, N-glycosylated. As to expression, ubiquitous with higher levels in placenta, heart, lung and spleen.

Its subcellular location is the endoplasmic reticulum lumen. The catalysed reaction is (5R)-5-hydroxy-L-lysyl-[collagen] + UDP-alpha-D-galactose = (5R)-5-O-(beta-D-galactosyl)-5-hydroxy-L-lysyl-[collagen] + UDP + H(+). In terms of biological role, beta-galactosyltransferase that transfers beta-galactose to hydroxylysine residues of type I collagen. By acting on collagen glycosylation, facilitates the formation of collagen triple helix. Also involved in the biosynthesis of collagen type IV. The polypeptide is Procollagen galactosyltransferase 1 (COLGALT1) (Homo sapiens (Human)).